A 113-amino-acid chain; its full sequence is uncharacterized protein (113 aa).

The first 38 residues, 1–38 (MVKIERKATDSAYHEFTKILTSSAQLMAFLNQSDFVKA), serve as a signal peptide directing secretion.

This is an uncharacterized protein from Haemophilus influenzae (strain ATCC 51907 / DSM 11121 / KW20 / Rd).